The following is a 376-amino-acid chain: Chaperone protein DnaJ (376 aa).

The 66-residue stretch at 5–70 (DFYDVLGVSK…EKKQNYDNFG (66 aa)) folds into the J domain. A CR-type zinc finger spans residues 137-215 (GKKQDIKFST…CNGQGNKQAS (79 aa)). Residues Cys150, Cys153, Cys167, Cys170, Cys189, Cys192, Cys203, and Cys206 each coordinate Zn(2+). 4 CXXCXGXG motif repeats span residues 150–157 (CNTCNGNG), 167–174 (CTVCGGNG), 189–196 (CPQCAGSG), and 203–210 (CTDCNGQG).

It belongs to the DnaJ family. As to quaternary structure, homodimer. Requires Zn(2+) as cofactor.

It localises to the cytoplasm. Its function is as follows. Participates actively in the response to hyperosmotic and heat shock by preventing the aggregation of stress-denatured proteins and by disaggregating proteins, also in an autonomous, DnaK-independent fashion. Unfolded proteins bind initially to DnaJ; upon interaction with the DnaJ-bound protein, DnaK hydrolyzes its bound ATP, resulting in the formation of a stable complex. GrpE releases ADP from DnaK; ATP binding to DnaK triggers the release of the substrate protein, thus completing the reaction cycle. Several rounds of ATP-dependent interactions between DnaJ, DnaK and GrpE are required for fully efficient folding. Also involved, together with DnaK and GrpE, in the DNA replication of plasmids through activation of initiation proteins. The protein is Chaperone protein DnaJ of Pelagibacter ubique (strain HTCC1062).